The following is a 313-amino-acid chain: Protein HEXIM2 (313 aa).

Positions 1 to 13 (MATVNHTNCNTAS) are enriched in polar residues. The tract at residues 1 to 78 (MATVNHTNCN…RGSRTQSPGG (78 aa)) is disordered. Residues Ser-28, Ser-52, Ser-75, and Ser-80 each carry the phosphoserine modification. Over residues 64–77 (SSCNIRGSRTQSPG) the composition is skewed to polar residues. 3 disordered regions span residues 111-139 (EKQQRDERQSQRASRVREEMFAKGQPLAP), 155-194 (PNLDVLHGPSHSGSGGENEAGDSDGQGRAHGEFQQRDFSE), and 267-313 (QENE…AGDR). Residues 112–131 (KQQRDERQSQRASRVREEMF) are compositionally biased toward basic and acidic residues. Residues 139-142 (PYNT) form an interaction with P-TEFb region. Over residues 179–194 (GQGRAHGEFQQRDFSE) the composition is skewed to basic and acidic residues. Residues 207 to 276 (RSKQELVRDY…QENEMWNREG (70 aa)) adopt a coiled-coil conformation. Residues 225–286 (QAEQETRRLR…GYCDQEKPAS (62 aa)) form an interaction with CCNT1, HEXIM1 and HEXIM2 region.

Belongs to the HEXIM family. In terms of assembly, homooligomer and heterooligomer with HEXIM1; probably dimeric. Core component of the 7SK RNP complex, at least composed of 7SK RNA, LARP7, MEPCE, HEXIM1 (or HEXIM2) and P-TEFb (composed of CDK9 and CCNT1/cyclin-T1). Interacts with CCNT2.

Its subcellular location is the nucleus. Functionally, transcriptional regulator which functions as a general RNA polymerase II transcription inhibitor. Core component of the 7SK RNP complex: in cooperation with 7SK snRNA sequesters P-TEFb in a large inactive 7SK snRNP complex preventing RNA polymerase II phosphorylation and subsequent transcriptional elongation. The polypeptide is Protein HEXIM2 (Hexim2) (Mus musculus (Mouse)).